A 342-amino-acid chain; its full sequence is Phosphoribosylformylglycinamidine cyclo-ligase (342 aa).

This sequence belongs to the AIR synthase family.

It localises to the cytoplasm. The catalysed reaction is 2-formamido-N(1)-(5-O-phospho-beta-D-ribosyl)acetamidine + ATP = 5-amino-1-(5-phospho-beta-D-ribosyl)imidazole + ADP + phosphate + H(+). It functions in the pathway purine metabolism; IMP biosynthesis via de novo pathway; 5-amino-1-(5-phospho-D-ribosyl)imidazole from N(2)-formyl-N(1)-(5-phospho-D-ribosyl)glycinamide: step 2/2. In Staphylococcus saprophyticus subsp. saprophyticus (strain ATCC 15305 / DSM 20229 / NCIMB 8711 / NCTC 7292 / S-41), this protein is Phosphoribosylformylglycinamidine cyclo-ligase.